A 1106-amino-acid polypeptide reads, in one-letter code: Communication mutant protein F (1106 aa).

The signal sequence occupies residues Met-1–Ala-28. Positions Thr-254–Ser-380 constitute a G8 domain. Asn-267, Asn-306, Asn-512, Asn-536, Asn-677, Asn-715, and Asn-833 each carry an N-linked (GlcNAc...) asparagine glycan.

This sequence belongs to the comF family.

The protein localises to the secreted. This chain is Communication mutant protein F (comF-1), found in Dictyostelium discoideum (Social amoeba).